Here is a 400-residue protein sequence, read N- to C-terminus: Probable peptidoglycan glycosyltransferase FtsW (400 aa).

At methionine 1–aspartate 24 the chain is on the cytoplasmic side. The helical transmembrane segment at leucine 25–alanine 45 threads the bilayer. Topologically, residues serine 46–arginine 63 are periplasmic. The chain crosses the membrane as a helical span at residues glutamine 64–glutamate 84. Topologically, residues arginine 85 to arginine 88 are cytoplasmic. A helical transmembrane segment spans residues alanine 89 to valine 109. Residues glycine 110–arginine 118 lie on the Periplasmic side of the membrane. The chain crosses the membrane as a helical span at residues tryptophan 119 to methionine 139. The Cytoplasmic portion of the chain corresponds to tyrosine 140–arginine 153. The chain crosses the membrane as a helical span at residues leucine 154–leucine 174. Topologically, residues leucine 175 to proline 177 are periplasmic. The chain crosses the membrane as a helical span at residues aspartate 178–alanine 198. Lysine 199 is a topological domain (cytoplasmic). The helical transmembrane segment at leucine 200–alanine 220 threads the bilayer. The Periplasmic portion of the chain corresponds to alanine 221–aspartate 278. A helical transmembrane segment spans residues phenylalanine 279–leucine 299. Over phenylalanine 300–histidine 324 the chain is Cytoplasmic. A helical transmembrane segment spans residues leucine 325 to methionine 345. The Periplasmic portion of the chain corresponds to glycine 346–threonine 354. The chain crosses the membrane as a helical span at residues leucine 355–valine 375. At methionine 376–alanine 400 the chain is on the cytoplasmic side.

The protein belongs to the SEDS family. FtsW subfamily.

It localises to the cell inner membrane. The enzyme catalyses [GlcNAc-(1-&gt;4)-Mur2Ac(oyl-L-Ala-gamma-D-Glu-L-Lys-D-Ala-D-Ala)](n)-di-trans,octa-cis-undecaprenyl diphosphate + beta-D-GlcNAc-(1-&gt;4)-Mur2Ac(oyl-L-Ala-gamma-D-Glu-L-Lys-D-Ala-D-Ala)-di-trans,octa-cis-undecaprenyl diphosphate = [GlcNAc-(1-&gt;4)-Mur2Ac(oyl-L-Ala-gamma-D-Glu-L-Lys-D-Ala-D-Ala)](n+1)-di-trans,octa-cis-undecaprenyl diphosphate + di-trans,octa-cis-undecaprenyl diphosphate + H(+). Its pathway is cell wall biogenesis; peptidoglycan biosynthesis. In terms of biological role, peptidoglycan polymerase that is essential for cell division. This chain is Probable peptidoglycan glycosyltransferase FtsW, found in Thioalkalivibrio sp. (strain K90mix).